The following is a 71-amino-acid chain: uncharacterized protein (71 aa).

Positions 20–32 (SSGRRQLTATQPR) are enriched in polar residues. Residues 20 to 46 (SSGRRQLTATQPRSDPESQRGRTSSNR) are disordered.

This is an uncharacterized protein from Rhizobium leguminosarum.